The sequence spans 863 residues: Leucine--tRNA ligase (863 aa).

The short motif at 42 to 52 is the 'HIGH' region element; that stretch reads PYPSGKIHMGH. Residues 618-622 carry the 'KMSKS' region motif; sequence KMSKS. ATP is bound at residue Lys-621.

It belongs to the class-I aminoacyl-tRNA synthetase family.

Its subcellular location is the cytoplasm. It catalyses the reaction tRNA(Leu) + L-leucine + ATP = L-leucyl-tRNA(Leu) + AMP + diphosphate. This Desulfatibacillum aliphaticivorans protein is Leucine--tRNA ligase.